Consider the following 156-residue polypeptide: Large ribosomal subunit protein uL13 (156 aa).

This sequence belongs to the universal ribosomal protein uL13 family. In terms of assembly, part of the 50S ribosomal subunit.

In terms of biological role, this protein is one of the early assembly proteins of the 50S ribosomal subunit, although it is not seen to bind rRNA by itself. It is important during the early stages of 50S assembly. This is Large ribosomal subunit protein uL13 from Archaeoglobus fulgidus (strain ATCC 49558 / DSM 4304 / JCM 9628 / NBRC 100126 / VC-16).